The sequence spans 511 residues: Maturase K (511 aa).

It belongs to the intron maturase 2 family. MatK subfamily.

The protein localises to the plastid. It is found in the chloroplast. Functionally, usually encoded in the trnK tRNA gene intron. Probably assists in splicing its own and other chloroplast group II introns. The sequence is that of Maturase K from Adesmia lanata.